Reading from the N-terminus, the 92-residue chain is MARTVNCVHLNKEADGLDFQLYPGDLGKRIFDNISKEAWGLWQKKQTMLINEKKLNMMNVDDRKFLEAQMTSFLFEGKDVEIEGFVPEKDQD.

This sequence belongs to the Fe(2+)-trafficking protein family.

Functionally, could be a mediator in iron transactions between iron acquisition and iron-requiring processes, such as synthesis and/or repair of Fe-S clusters in biosynthetic enzymes. The sequence is that of Probable Fe(2+)-trafficking protein from Shewanella oneidensis (strain ATCC 700550 / JCM 31522 / CIP 106686 / LMG 19005 / NCIMB 14063 / MR-1).